Reading from the N-terminus, the 284-residue chain is NADPH-dependent 7-cyano-7-deazaguanine reductase (284 aa).

91-93 (IES) lines the substrate pocket. Residue 93–94 (SK) coordinates NADPH. The active-site Thioimide intermediate is the cysteine 192. Catalysis depends on aspartate 199, which acts as the Proton donor. 231 to 232 (HE) contacts substrate. An NADPH-binding site is contributed by 260-261 (RG).

Belongs to the GTP cyclohydrolase I family. QueF type 2 subfamily. Homodimer.

The protein localises to the cytoplasm. The catalysed reaction is 7-aminomethyl-7-carbaguanine + 2 NADP(+) = 7-cyano-7-deazaguanine + 2 NADPH + 3 H(+). Its pathway is tRNA modification; tRNA-queuosine biosynthesis. Catalyzes the NADPH-dependent reduction of 7-cyano-7-deazaguanine (preQ0) to 7-aminomethyl-7-deazaguanine (preQ1). This is NADPH-dependent 7-cyano-7-deazaguanine reductase from Shewanella denitrificans (strain OS217 / ATCC BAA-1090 / DSM 15013).